We begin with the raw amino-acid sequence, 162 residues long: 2-C-methyl-D-erythritol 2,4-cyclodiphosphate synthase (162 aa).

Aspartate 8 and histidine 10 together coordinate a divalent metal cation. 4-CDP-2-C-methyl-D-erythritol 2-phosphate is bound by residues 8–10 and 36–37; these read DVH and HS. Residue histidine 44 participates in a divalent metal cation binding. Residues 58 to 60, 63 to 67, 102 to 108, 134 to 137, phenylalanine 141, and arginine 144 each bind 4-CDP-2-C-methyl-D-erythritol 2-phosphate; these read DIG, FPDTD, AQAPKMA, and TTTE.

Belongs to the IspF family. As to quaternary structure, homotrimer. The cofactor is a divalent metal cation.

It catalyses the reaction 4-CDP-2-C-methyl-D-erythritol 2-phosphate = 2-C-methyl-D-erythritol 2,4-cyclic diphosphate + CMP. It functions in the pathway isoprenoid biosynthesis; isopentenyl diphosphate biosynthesis via DXP pathway; isopentenyl diphosphate from 1-deoxy-D-xylulose 5-phosphate: step 4/6. Functionally, involved in the biosynthesis of isopentenyl diphosphate (IPP) and dimethylallyl diphosphate (DMAPP), two major building blocks of isoprenoid compounds. Catalyzes the conversion of 4-diphosphocytidyl-2-C-methyl-D-erythritol 2-phosphate (CDP-ME2P) to 2-C-methyl-D-erythritol 2,4-cyclodiphosphate (ME-CPP) with a corresponding release of cytidine 5-monophosphate (CMP). The chain is 2-C-methyl-D-erythritol 2,4-cyclodiphosphate synthase from Yersinia pseudotuberculosis serotype IB (strain PB1/+).